Here is a 160-residue protein sequence, read N- to C-terminus: 2-amino-4-hydroxy-6-hydroxymethyldihydropteridine pyrophosphokinase (160 aa).

Belongs to the HPPK family. As to quaternary structure, monomer.

The catalysed reaction is 6-hydroxymethyl-7,8-dihydropterin + ATP = (7,8-dihydropterin-6-yl)methyl diphosphate + AMP + H(+). Its pathway is cofactor biosynthesis; tetrahydrofolate biosynthesis; 2-amino-4-hydroxy-6-hydroxymethyl-7,8-dihydropteridine diphosphate from 7,8-dihydroneopterin triphosphate: step 4/4. Catalyzes the transfer of pyrophosphate from adenosine triphosphate (ATP) to 6-hydroxymethyl-7,8-dihydropterin, an enzymatic step in folate biosynthesis pathway. The protein is 2-amino-4-hydroxy-6-hydroxymethyldihydropteridine pyrophosphokinase (folK) of Haemophilus influenzae (strain ATCC 51907 / DSM 11121 / KW20 / Rd).